A 139-amino-acid polypeptide reads, in one-letter code: Large ribosomal subunit protein uL16 (139 aa).

A compositionally biased stretch (basic residues) spans 1-17; the sequence is MLIPRKVKHRKQHHPGR. The disordered stretch occupies residues 1–24; it reads MLIPRKVKHRKQHHPGRTGHATGG.

Belongs to the universal ribosomal protein uL16 family. As to quaternary structure, part of the 50S ribosomal subunit.

Binds 23S rRNA and is also seen to make contacts with the A and possibly P site tRNAs. The polypeptide is Large ribosomal subunit protein uL16 (Clavibacter michiganensis subsp. michiganensis (strain NCPPB 382)).